The chain runs to 181 residues: Probable nicotinate-nucleotide adenylyltransferase (181 aa).

Belongs to the NadD family.

It carries out the reaction nicotinate beta-D-ribonucleotide + ATP + H(+) = deamido-NAD(+) + diphosphate. The protein operates within cofactor biosynthesis; NAD(+) biosynthesis; deamido-NAD(+) from nicotinate D-ribonucleotide: step 1/1. In terms of biological role, catalyzes the reversible adenylation of nicotinate mononucleotide (NaMN) to nicotinic acid adenine dinucleotide (NaAD). This chain is Probable nicotinate-nucleotide adenylyltransferase, found in Campylobacter fetus subsp. fetus (strain 82-40).